The sequence spans 1417 residues: DNA-directed RNA polymerase subunit beta' (1417 aa).

Positions 68, 70, 83, and 86 each coordinate Zn(2+). Aspartate 458, aspartate 460, and aspartate 462 together coordinate Mg(2+). Zn(2+)-binding residues include cysteine 811, cysteine 884, cysteine 891, and cysteine 894.

This sequence belongs to the RNA polymerase beta' chain family. The RNAP catalytic core consists of 2 alpha, 1 beta, 1 beta' and 1 omega subunit. When a sigma factor is associated with the core the holoenzyme is formed, which can initiate transcription. The cofactor is Mg(2+). Requires Zn(2+) as cofactor.

It catalyses the reaction RNA(n) + a ribonucleoside 5'-triphosphate = RNA(n+1) + diphosphate. Functionally, DNA-dependent RNA polymerase catalyzes the transcription of DNA into RNA using the four ribonucleoside triphosphates as substrates. This Francisella tularensis subsp. mediasiatica (strain FSC147) protein is DNA-directed RNA polymerase subunit beta'.